The chain runs to 1309 residues: Clustered mitochondria protein homolog (1309 aa).

The tract at residues 1–34 (MLLNGDCPESLKKEAAAAEPPRENGLDEAGPGDE) is disordered. Residues 9–25 (ESLKKEAAAAEPPRENG) show a composition bias toward basic and acidic residues. A phosphoserine mark is found at S279 and S281. The region spanning 335 to 577 (RAEDAYTSRL…RTFPPDLNFL (243 aa)) is the Clu domain. The span at 636 to 651 (LETPSSLENGGPSSLE) shows a compositional bias: polar residues. The disordered stretch occupies residues 636–674 (LETPSSLENGGPSSLESKSEDPPGQEAGSEEEGSSASGL). Phosphoserine occurs at positions 654, 664, and 723. TPR repeat units follow at residues 978-1011 (AFHF…FNNV), 1020-1053 (CACL…SERV), 1104-1137 (ALLD…STKY), and 1146-1179 (ALSH…YKTQ). The span at 1264-1278 (HQLQEASRNRDRAEE) shows a compositional bias: basic and acidic residues. The segment at 1264–1309 (HQLQEASRNRDRAEEPMATEPAPAGAPGDLGSQPPAAKDPSPSVQG) is disordered. Residues 1279-1290 (PMATEPAPAGAP) are compositionally biased toward low complexity.

The protein belongs to the CLU family.

The protein resides in the cytoplasm. It localises to the cytoplasmic granule. Functionally, mRNA-binding protein involved in proper cytoplasmic distribution of mitochondria. Specifically binds mRNAs of nuclear-encoded mitochondrial proteins in the cytoplasm and regulates transport or translation of these transcripts close to mitochondria, playing a role in mitochondrial biogenesis. This is Clustered mitochondria protein homolog (CLUH) from Homo sapiens (Human).